Reading from the N-terminus, the 469-residue chain is Glutamate--tRNA ligase 1 (469 aa).

The short motif at 9-19 is the 'HIGH' region element; the sequence is PSPTGYLHVGG. C98, C100, C125, and E127 together coordinate Zn(2+). The short motif at 236–240 is the 'KMSKS' region element; that stretch reads RLSKR. An ATP-binding site is contributed by K239.

It belongs to the class-I aminoacyl-tRNA synthetase family. Glutamate--tRNA ligase type 1 subfamily. As to quaternary structure, monomer. Zn(2+) is required as a cofactor.

It is found in the cytoplasm. The catalysed reaction is tRNA(Glu) + L-glutamate + ATP = L-glutamyl-tRNA(Glu) + AMP + diphosphate. Catalyzes the attachment of glutamate to tRNA(Glu) in a two-step reaction: glutamate is first activated by ATP to form Glu-AMP and then transferred to the acceptor end of tRNA(Glu). The polypeptide is Glutamate--tRNA ligase 1 (Nitrosococcus oceani (strain ATCC 19707 / BCRC 17464 / JCM 30415 / NCIMB 11848 / C-107)).